A 140-amino-acid polypeptide reads, in one-letter code: Arsenate reductase (140 aa).

Catalysis depends on C11, which acts as the Nucleophile; cysteine thioarsenate intermediate.

It belongs to the ArsC family.

It carries out the reaction [glutaredoxin]-dithiol + arsenate + glutathione + H(+) = glutathionyl-S-S-[glutaredoxin] + arsenite + H2O. Functionally, involved in resistance to arsenate. Catalyzes the reduction of arsenate [As(V)] to arsenite [As(III)]. The resulting arsenite is then extruded from the cell via the aquaglyceroporin AqpS. Does not display antimonate reductase activity. In Rhizobium meliloti (strain 1021) (Ensifer meliloti), this protein is Arsenate reductase.